The chain runs to 593 residues: Probable 5'-nucleotidase (593 aa).

The signal sequence occupies residues 1–21 (MKRFIPHRVIHAVCIGLALVG). A lipid anchor (N-palmitoyl cysteine) is attached at cysteine 22. A lipid anchor (S-diacylglycerol cysteine) is attached at cysteine 22. Residues aspartate 41, histidine 43, aspartate 91, asparagine 123, and histidine 224 each contribute to the a divalent metal cation site. Substrate contacts are provided by residues phenylalanine 456 and 539–545 (YIARGKD).

This sequence belongs to the 5'-nucleotidase family. It depends on a divalent metal cation as a cofactor.

It localises to the cell membrane. It catalyses the reaction a ribonucleoside 5'-phosphate + H2O = a ribonucleoside + phosphate. In Treponema pallidum (strain Nichols), this protein is Probable 5'-nucleotidase.